The sequence spans 39 residues: Potassium channel toxin alpha-KTx 2.23 (39 aa).

3 cysteine pairs are disulfide-bonded: Cys-7-Cys-29, Cys-13-Cys-34, and Cys-17-Cys-36.

In terms of tissue distribution, expressed by the venom gland.

It localises to the secreted. Blocks human voltage-gated potassium (Kv) channels Kv1.1/KCNA1, Kv1.2/KCNA2 and Kv1.3/KCNA3. The polypeptide is Potassium channel toxin alpha-KTx 2.23 (Centruroides bonito (Scorpion)).